The primary structure comprises 235 residues: Ribonuclease 3 (235 aa).

Residues Pro8–Gly137 enclose the RNase III domain. A Mg(2+)-binding site is contributed by Glu50. Asp54 is an active-site residue. Asp123 and Glu126 together coordinate Mg(2+). Glu126 is a catalytic residue. Residues Asp163 to Gly232 enclose the DRBM domain. Residues Gln211 to Gly235 are disordered. The span at Ala226–Gly235 shows a compositional bias: basic and acidic residues.

Belongs to the ribonuclease III family. As to quaternary structure, homodimer. The cofactor is Mg(2+).

The protein localises to the cytoplasm. The catalysed reaction is Endonucleolytic cleavage to 5'-phosphomonoester.. Its function is as follows. Digests double-stranded RNA. Involved in the processing of primary rRNA transcript to yield the immediate precursors to the large and small rRNAs (23S and 16S). Processes some mRNAs, and tRNAs when they are encoded in the rRNA operon. Processes pre-crRNA and tracrRNA of type II CRISPR loci if present in the organism. This chain is Ribonuclease 3, found in Heliobacterium modesticaldum (strain ATCC 51547 / Ice1).